The primary structure comprises 1212 residues: Probable serine/threonine-protein kinase DDB_G0284491 (1212 aa).

The chain crosses the membrane as a helical span at residues 197–217 (LFHSFSLLNLYVYLIIVIRII). N-linked (GlcNAc...) asparagine glycans are attached at residues N229, N299, N309, N328, N335, N341, N344, N391, N419, N422, N426, N427, N435, and N499. The disordered stretch occupies residues 288–329 (LNNNNDNNLNNNNSNNNLNNNNNSNSNFNNDNNLNSNINSND). Disordered regions lie at residues 412 to 439 (GNSN…NSGG) and 489 to 517 (IIKN…DYEE). Low complexity predominate over residues 489–507 (IIKNNNNNNNNNSNNNNNN). Over residues 508–517 (NDEDDSDYEE) the composition is skewed to acidic residues. Residues 673-693 (IQIFDDYSLIIALRLLMNFIL) traverse the membrane as a helical segment. A compositionally biased stretch (pro residues) spans 703-720 (VPPPPTQPSSRPQSPPTV). Disordered stretches follow at residues 703-733 (VPPP…HHSG) and 751-813 (EVVS…NNNN). The Protein kinase domain occupies 865–1182 (ETEIEPFASG…EVYNDLQDIY (318 aa)). Residues 871-879 (FASGGQANI) and K924 each bind ATP. The active-site Proton acceptor is D1035.

Belongs to the protein kinase superfamily. Ser/Thr protein kinase family.

The protein localises to the membrane. It catalyses the reaction L-seryl-[protein] + ATP = O-phospho-L-seryl-[protein] + ADP + H(+). The enzyme catalyses L-threonyl-[protein] + ATP = O-phospho-L-threonyl-[protein] + ADP + H(+). The sequence is that of Probable serine/threonine-protein kinase DDB_G0284491 from Dictyostelium discoideum (Social amoeba).